We begin with the raw amino-acid sequence, 602 residues long: MRLSQMLFVTLRDEPAEAEIPSHKLLLRAGYIRRIASGIYSYLPLMWRVLQKVSAIVREEMNRSGALECLLPQLQPAELWQESGRWDTYTKAEGIMFSLTDRAQRQLGLGPTHEEVITALAKDLIRSYRQLPVHLYQIQTKFRDEIRPRFGLMRGREFIMKDGYSFHADVASLKETYQVMYDTYSRILQRCGLTFRAVEADSGAIGGSGSHEFMVLAAAGEDEVLYTADGQYAANVEKAVSLPPDAVPTTYKTVATLDTPNAATIDALVEQLQCHPTQIVKNVLYRAVFDNGRVGLVLVSIRGDQEVNSVKLHNTLTSLAPNYGATKLLDLRLADAHTAQEWAATPIPFGYIGPDLEDAVIKADSQIIPQWIRIADRTVVELKRFITGANRDQQHRVGVNWGKSCPLPAIIADVRKAQAGDRACHDPTQHLEAARGIEIGHIFQLGTKYSEAMKATYTNEQGEEVPLVMGCYGIGISRLAQAAVEQHHDAQGIVWPLAIAPYQVIIVVPNIGDAQQMQAATDLYEQLQAAGIEVLLDDRDERAGVKFKDADLIGIPYRLVTGRAIANGEVELIIRATGAKSTLPLTEVVRYLQKEIAQQLAP.

It belongs to the class-II aminoacyl-tRNA synthetase family. ProS type 1 subfamily. As to quaternary structure, homodimer.

Its subcellular location is the cytoplasm. The enzyme catalyses tRNA(Pro) + L-proline + ATP = L-prolyl-tRNA(Pro) + AMP + diphosphate. Catalyzes the attachment of proline to tRNA(Pro) in a two-step reaction: proline is first activated by ATP to form Pro-AMP and then transferred to the acceptor end of tRNA(Pro). As ProRS can inadvertently accommodate and process non-cognate amino acids such as alanine and cysteine, to avoid such errors it has two additional distinct editing activities against alanine. One activity is designated as 'pretransfer' editing and involves the tRNA(Pro)-independent hydrolysis of activated Ala-AMP. The other activity is designated 'posttransfer' editing and involves deacylation of mischarged Ala-tRNA(Pro). The misacylated Cys-tRNA(Pro) is not edited by ProRS. This Thermosynechococcus vestitus (strain NIES-2133 / IAM M-273 / BP-1) protein is Proline--tRNA ligase.